We begin with the raw amino-acid sequence, 326 residues long: Ketol-acid reductoisomerase (NADP(+)) (326 aa).

The 180-residue stretch at 1–180 (MDIIHDNAAD…GLTRGGVLEC (180 aa)) folds into the KARI N-terminal Rossmann domain. NADP(+) is bound by residues 24–27 (YGAQ), arginine 47, and serine 51. Histidine 106 is an active-site residue. Position 132 (glycine 132) interacts with NADP(+). The region spanning 181–326 (TMAQETYEDL…AKIRSLFERN (146 aa)) is the KARI C-terminal knotted domain. Residues aspartate 189, glutamate 193, glutamate 225, and glutamate 229 each contribute to the Mg(2+) site. Serine 250 lines the substrate pocket.

It belongs to the ketol-acid reductoisomerase family. Mg(2+) is required as a cofactor.

The catalysed reaction is (2R)-2,3-dihydroxy-3-methylbutanoate + NADP(+) = (2S)-2-acetolactate + NADPH + H(+). It catalyses the reaction (2R,3R)-2,3-dihydroxy-3-methylpentanoate + NADP(+) = (S)-2-ethyl-2-hydroxy-3-oxobutanoate + NADPH + H(+). The protein operates within amino-acid biosynthesis; L-isoleucine biosynthesis; L-isoleucine from 2-oxobutanoate: step 2/4. Its pathway is amino-acid biosynthesis; L-valine biosynthesis; L-valine from pyruvate: step 2/4. In terms of biological role, involved in the biosynthesis of branched-chain amino acids (BCAA). Catalyzes an alkyl-migration followed by a ketol-acid reduction of (S)-2-acetolactate (S2AL) to yield (R)-2,3-dihydroxy-isovalerate. In the isomerase reaction, S2AL is rearranged via a Mg-dependent methyl migration to produce 3-hydroxy-3-methyl-2-ketobutyrate (HMKB). In the reductase reaction, this 2-ketoacid undergoes a metal-dependent reduction by NADPH to yield (R)-2,3-dihydroxy-isovalerate. The chain is Ketol-acid reductoisomerase (NADP(+)) from Akkermansia muciniphila (strain ATCC BAA-835 / DSM 22959 / JCM 33894 / BCRC 81048 / CCUG 64013 / CIP 107961 / Muc).